Reading from the N-terminus, the 132-residue chain is uncharacterized protein (132 aa).

This is an uncharacterized protein from Mycoplasma genitalium (strain ATCC 33530 / DSM 19775 / NCTC 10195 / G37) (Mycoplasmoides genitalium).